Here is a 616-residue protein sequence, read N- to C-terminus: Dihydroxy-acid dehydratase (616 aa).

Asp81 contacts Mg(2+). [2Fe-2S] cluster is bound at residue Cys122. Mg(2+) contacts are provided by Asp123 and Lys124. Lys124 is subject to N6-carboxylysine. Cys195 serves as a coordination point for [2Fe-2S] cluster. Residue Glu491 participates in Mg(2+) binding. Ser517 acts as the Proton acceptor in catalysis.

It belongs to the IlvD/Edd family. In terms of assembly, homodimer. Requires [2Fe-2S] cluster as cofactor. Mg(2+) serves as cofactor.

The catalysed reaction is (2R)-2,3-dihydroxy-3-methylbutanoate = 3-methyl-2-oxobutanoate + H2O. It carries out the reaction (2R,3R)-2,3-dihydroxy-3-methylpentanoate = (S)-3-methyl-2-oxopentanoate + H2O. It functions in the pathway amino-acid biosynthesis; L-isoleucine biosynthesis; L-isoleucine from 2-oxobutanoate: step 3/4. The protein operates within amino-acid biosynthesis; L-valine biosynthesis; L-valine from pyruvate: step 3/4. Functionally, functions in the biosynthesis of branched-chain amino acids. Catalyzes the dehydration of (2R,3R)-2,3-dihydroxy-3-methylpentanoate (2,3-dihydroxy-3-methylvalerate) into 2-oxo-3-methylpentanoate (2-oxo-3-methylvalerate) and of (2R)-2,3-dihydroxy-3-methylbutanoate (2,3-dihydroxyisovalerate) into 2-oxo-3-methylbutanoate (2-oxoisovalerate), the penultimate precursor to L-isoleucine and L-valine, respectively. This is Dihydroxy-acid dehydratase from Shigella sonnei (strain Ss046).